The primary structure comprises 558 residues: Arginine--tRNA ligase (558 aa).

A 'HIGH' region motif is present at residues 116 to 126 (ANPNGPLHVGH).

Belongs to the class-I aminoacyl-tRNA synthetase family.

It localises to the cytoplasm. The catalysed reaction is tRNA(Arg) + L-arginine + ATP = L-arginyl-tRNA(Arg) + AMP + diphosphate. This Methanocorpusculum labreanum (strain ATCC 43576 / DSM 4855 / Z) protein is Arginine--tRNA ligase.